Reading from the N-terminus, the 241-residue chain is ATP synthase subunit a (241 aa).

6 helical membrane-spanning segments follow: residues 19–39 (AVLI…AKMA), 80–100 (LVAA…IPGF), 106–126 (NINV…YEGI), 135–155 (FAHF…IEIV), 177–197 (LFLW…AYLL), and 203–223 (LLQT…AVAI).

This sequence belongs to the ATPase A chain family. In terms of assembly, F-type ATPases have 2 components, CF(1) - the catalytic core - and CF(0) - the membrane proton channel. CF(1) has five subunits: alpha(3), beta(3), gamma(1), delta(1), epsilon(1). CF(0) has three main subunits: a(1), b(2) and c(9-12). The alpha and beta chains form an alternating ring which encloses part of the gamma chain. CF(1) is attached to CF(0) by a central stalk formed by the gamma and epsilon chains, while a peripheral stalk is formed by the delta and b chains.

It is found in the cell inner membrane. Functionally, key component of the proton channel; it plays a direct role in the translocation of protons across the membrane. This chain is ATP synthase subunit a, found in Sulfurovum sp. (strain NBC37-1).